An 831-amino-acid polypeptide reads, in one-letter code: MEAFGGFVMDEQAIQVENVFLEFLKSFRLDANKPELYYEAEIEAIRGGESTMMYIDFSHVMGFNDALQKAIADEYLRFEPYLRNACKRFVIEMNPSFISDDTPNKDINVSFYNLPFTKRLRELTTAEIGKLVSVTGVVTRTSEVRPELLYGTFKCLDCGSVIKNVEQQFKYTQPTICVSPTCLNRARWALLRQESKFADWQRVRMQETSKEIPAGSLPRSLDVILRHEIVEQARAGDTVIFTGTVVVIPDISALAAPGERAECRRDSSQQKSSTAGHEGVQGLKALGVRDLSYRLAFIANSVQIADGSRNTDMRNRQNDSNEDDQQQFTAEELDEIQQMRNTPDYFNKLVGSMAPTVFGHQDIKRAVLLMLLGGVHKTTHEGINLRGDINVCIVGDPSCAKSQFLKYTAGIVPRSVYTSGKSSSAAGLTATVAKEPETGEFCIEAGALMLADNGICCIDEFDKMDIKDQVAIHEAMEQQTISITKAGIQATLNARTSILAAANPVGGRYDKSKPLKYNVNLPPAILSRFDLVYVMIDDPDEVTDYHIAHHIVRVHQKHEAALSPEFTTVQLKRYIAYAKTLKPKLSPEARKLLVESYVALRRGDTTPGTRVAYRMTVRQLEALIRLSEAIARSHLEILVKPSHVLLAVRLLKTSVISVESGDIDLSEYQDANGDNMDDTDDIENPVDGEEDQQNGAAEPASATADNGAAAQKLVISEEEYDRITQALVIRLRQHEETVNKDSSELPGIRQKELIRWFIDQQNEKKKYSSQEQVKLDIKKLRAIIESLVCKEGHLIVLANEQEEAAEAEETKKKSSQRDERILAVAPNYVIE.

The C4-type zinc finger occupies Cys-155–Cys-182. The disordered stretch occupies residues Gly-258–Glu-278. Residues Glu-259–Ser-268 are compositionally biased toward basic and acidic residues. The MCM domain occupies Tyr-345 to Ile-551. Residue Gly-395–Ser-402 participates in ATP binding. The Arginine finger motif lies at Ser-527–Asp-530. Positions Ser-666–Asp-705 are disordered. Residues Asn-675 to Gln-692 show a composition bias toward acidic residues.

It belongs to the MCM family. Component of the minichromosome maintenance (MCM) complex, a heterotetramer composed of MCM2, MCM3, MCM4, MCM5, MCM6 and MCM7. Interacts with ETG1. In terms of tissue distribution, expressed in shoot apex and flower buds.

Its subcellular location is the nucleus. The catalysed reaction is ATP + H2O = ADP + phosphate + H(+). In terms of biological role, probable component of the MCM2-7 complex (MCM complex) that may function as a DNA helicase and which is essential to undergo a single round of replication initiation and elongation per cell cycle in eukaryotic cells. This is DNA replication licensing factor MCM6 (MCM6) from Arabidopsis thaliana (Mouse-ear cress).